The primary structure comprises 300 residues: Tyrosine recombinase XerC (300 aa).

Positions 2–87 (TSLSPLLEKF…SIKSFYKYLV (86 aa)) constitute a Core-binding (CB) domain. The 187-residue stretch at 108–294 (TLPKVLPVEE…TWEQLQQVYD (187 aa)) folds into the Tyr recombinase domain. Catalysis depends on residues Arg-148, Lys-172, His-246, Arg-249, and His-272. Tyr-281 functions as the O-(3'-phospho-DNA)-tyrosine intermediate in the catalytic mechanism.

This sequence belongs to the 'phage' integrase family. XerC subfamily. In terms of assembly, forms a cyclic heterotetrameric complex composed of two molecules of XerC and two molecules of XerD.

It localises to the cytoplasm. Functionally, site-specific tyrosine recombinase, which acts by catalyzing the cutting and rejoining of the recombining DNA molecules. The XerC-XerD complex is essential to convert dimers of the bacterial chromosome into monomers to permit their segregation at cell division. It also contributes to the segregational stability of plasmids. The sequence is that of Tyrosine recombinase XerC from Myxococcus xanthus.